A 194-amino-acid chain; its full sequence is RNA pyrophosphohydrolase (194 aa).

Residues 6 to 149 enclose the Nudix hydrolase domain; it reads GFRPNVGIIL…KRDVYQRALQ (144 aa). The Nudix box motif lies at 38-59; it reads GGIKFGETPEQAMYRELEEEVG. The interval 158 to 194 is disordered; that stretch reads PTQHVPPQHNTARYLRQTHASRKPDEPSTEKTKPDNE. The segment covering 179-194 has biased composition (basic and acidic residues); the sequence is RKPDEPSTEKTKPDNE.

This sequence belongs to the Nudix hydrolase family. RppH subfamily. The cofactor is a divalent metal cation.

Accelerates the degradation of transcripts by removing pyrophosphate from the 5'-end of triphosphorylated RNA, leading to a more labile monophosphorylated state that can stimulate subsequent ribonuclease cleavage. The sequence is that of RNA pyrophosphohydrolase from Janthinobacterium sp. (strain Marseille) (Minibacterium massiliensis).